A 412-amino-acid chain; its full sequence is ATP phosphoribosyltransferase regulatory subunit (412 aa).

This sequence belongs to the class-II aminoacyl-tRNA synthetase family. HisZ subfamily. As to quaternary structure, heteromultimer composed of HisG and HisZ subunits.

It localises to the cytoplasm. It participates in amino-acid biosynthesis; L-histidine biosynthesis; L-histidine from 5-phospho-alpha-D-ribose 1-diphosphate: step 1/9. Its function is as follows. Required for the first step of histidine biosynthesis. May allow the feedback regulation of ATP phosphoribosyltransferase activity by histidine. In Dehalococcoides mccartyi (strain ATCC BAA-2266 / KCTC 15142 / 195) (Dehalococcoides ethenogenes (strain 195)), this protein is ATP phosphoribosyltransferase regulatory subunit.